Here is a 435-residue protein sequence, read N- to C-terminus: NADH-quinone oxidoreductase subunit D (435 aa).

The protein belongs to the complex I 49 kDa subunit family. As to quaternary structure, NDH-1 is composed of 14 different subunits. Subunits NuoB, C, D, E, F, and G constitute the peripheral sector of the complex.

The protein localises to the cell inner membrane. The catalysed reaction is a quinone + NADH + 5 H(+)(in) = a quinol + NAD(+) + 4 H(+)(out). In terms of biological role, NDH-1 shuttles electrons from NADH, via FMN and iron-sulfur (Fe-S) centers, to quinones in the respiratory chain. The immediate electron acceptor for the enzyme in this species is believed to be ubiquinone. Couples the redox reaction to proton translocation (for every two electrons transferred, four hydrogen ions are translocated across the cytoplasmic membrane), and thus conserves the redox energy in a proton gradient. The sequence is that of NADH-quinone oxidoreductase subunit D from Xanthomonas euvesicatoria pv. vesicatoria (strain 85-10) (Xanthomonas campestris pv. vesicatoria).